The primary structure comprises 126 residues: Holo-[acyl-carrier-protein] synthase (126 aa).

Aspartate 6 and glutamate 55 together coordinate Mg(2+).

It belongs to the P-Pant transferase superfamily. AcpS family. Requires Mg(2+) as cofactor.

The protein localises to the cytoplasm. It carries out the reaction apo-[ACP] + CoA = holo-[ACP] + adenosine 3',5'-bisphosphate + H(+). Functionally, transfers the 4'-phosphopantetheine moiety from coenzyme A to a Ser of acyl-carrier-protein. The protein is Holo-[acyl-carrier-protein] synthase of Chlorobium limicola (strain DSM 245 / NBRC 103803 / 6330).